Consider the following 176-residue polypeptide: Ribosome maturation factor RimM (176 aa).

Residues 97–176 (EDEFYWRDLI…QILVDWDPDF (80 aa)) form the PRC barrel domain.

The protein belongs to the RimM family. In terms of assembly, binds ribosomal protein uS19.

It is found in the cytoplasm. Functionally, an accessory protein needed during the final step in the assembly of 30S ribosomal subunit, possibly for assembly of the head region. Essential for efficient processing of 16S rRNA. May be needed both before and after RbfA during the maturation of 16S rRNA. It has affinity for free ribosomal 30S subunits but not for 70S ribosomes. The polypeptide is Ribosome maturation factor RimM (Shewanella sp. (strain MR-4)).